The following is a 249-amino-acid chain: Granaticin polyketide synthase putative ketoacyl reductase 2 (249 aa).

12–36 (LVTGSSSGIGQTVAQRLAAEGYRVV) contacts NAD(+). Serine 144 contacts substrate. Tyrosine 157 serves as the catalytic Proton acceptor.

It belongs to the short-chain dehydrogenases/reductases (SDR) family.

It participates in antibiotic biosynthesis; granaticin biosynthesis. The sequence is that of Granaticin polyketide synthase putative ketoacyl reductase 2 (gra-orf6) from Streptomyces violaceoruber.